A 486-amino-acid polypeptide reads, in one-letter code: Glutamate--tRNA ligase 1 (486 aa).

The 'HIGH' region motif lies at 9-19; the sequence is PSPTGMLHIGG. A 'KMSKS' region motif is present at residues 259–263; that stretch reads KLSKR. Lys262 provides a ligand contact to ATP.

It belongs to the class-I aminoacyl-tRNA synthetase family. Glutamate--tRNA ligase type 1 subfamily. As to quaternary structure, monomer.

It is found in the cytoplasm. The catalysed reaction is tRNA(Glu) + L-glutamate + ATP = L-glutamyl-tRNA(Glu) + AMP + diphosphate. Functionally, catalyzes the attachment of glutamate to tRNA(Glu) in a two-step reaction: glutamate is first activated by ATP to form Glu-AMP and then transferred to the acceptor end of tRNA(Glu). The sequence is that of Glutamate--tRNA ligase 1 from Hyphomonas neptunium (strain ATCC 15444).